A 306-amino-acid polypeptide reads, in one-letter code: Protein SULFUR DEFICIENCY-INDUCED 1 (306 aa).

5 TPR repeats span residues 1 to 22 (MERSLKKTKNNYNNSIKSNLMK), 71 to 104 (DSALKDMAVVMKQLDRSEEAIEAIKSFRPRCSKN), 107 to 140 (DSLDNVLIDLYKKCGRMEEQVELLKRKLRQIYQG), 167 to 200 (SRLLGNLGWAYMQQAKYLSAEAVYRKAQMVEPDA), and 202 to 233 (KSCNLAMCLIKQGRFEEGRLVLDDVLEYRVLG). Positions 72–139 (SALKDMAVVM…LKRKLRQIYQ (68 aa)) form a coiled coil. A coiled-coil region spans residues 238 to 260 (RTRQRAEELLSELESSLPRMRDA). The stretch at 270 to 304 (LDDDFVLGLEEMTSTSFKSKRLPIFEQISSFRNTL) is one TPR 6 repeat.

The protein belongs to the MS5 protein family.

The protein localises to the nucleus. Involved in the utilization of stored sulfate under sulfur-deficient conditions. The chain is Protein SULFUR DEFICIENCY-INDUCED 1 from Arabidopsis thaliana (Mouse-ear cress).